A 739-amino-acid polypeptide reads, in one-letter code: Oxysterol-binding protein-related protein 9 (739 aa).

In terms of domain architecture, PH spans 2 to 99; sequence ASIMEGPLSK…WIHALEETIL (98 aa). Disordered regions lie at residues 220–292 and 306–371; these read TQAS…SYSS and SSTS…ESVE. Over residues 249–259 the composition is skewed to polar residues; sequence NLGSRQSPTPI. A compositionally biased stretch (low complexity) spans 260–276; that stretch reads STGSGQSAPSSSLTSPS. Polar residues-rich tracts occupy residues 277-292, 306-330, and 338-352; these read HVNL…SYSS, SSTS…STGA, and TESL…TNEA.

This sequence belongs to the OSBP family.

The enzyme catalyses a 1,2-diacyl-sn-glycero-3-phospho-(1D-myo-inositol 4-phosphate)(out) + a 1,2-diacyl-sn-glycero-3-phospho-L-serine(in) = a 1,2-diacyl-sn-glycero-3-phospho-(1D-myo-inositol 4-phosphate)(in) + a 1,2-diacyl-sn-glycero-3-phospho-L-serine(out). Functionally, interacts with OSBPL11 to function as lipid transfer proteins. Together they form a heterodimer that localizes at the ER-trans-Golgi membrane contact sites, and exchanges phosphatidylserine (1,2-diacyl-sn-glycero-3-phospho-L-serine, PS) for phosphatidylinositol-4-phosphate (1,2-diacyl-sn-glycero-3-phospho-(1D-myo-inositol 4-phosphate), PI(4)P) between the two organelles, a step that is critical for sphingomyelin synthesis in the Golgi complex. The sequence is that of Oxysterol-binding protein-related protein 9 (osbpl9) from Xenopus tropicalis (Western clawed frog).